The sequence spans 402 residues: MADAAAPDAASVRNFTINFGPQHPAAHGVLRLVLELDGEVVERVDPHIGLLHRGTEKLIEQKTYLQAIPYFDRLDYVAPMNQEHAFCLAVEKLLGIAVPRRAQLIRVLYAEIGRILSHLLNVTTQAMDVGALTPPLWGFEEREKLMMFYERASGSRMHAAYFRVGGVHQDLPPKLVDDIDAWCDAFPAVVNDLDRLLSDNRIFKQRNVDIGVVTLDQAWSWGFSGVMVRGSGAAWDLRKSQPYECYAELDFEVPIGKNGDCYDRYHIRMEEMRQSVRIMKQCIAKLRAPHGQGPVVVDDHKIFPPRRGEMKRSMEALIHHFKLYTEGFHVPAGEVYVAVEAPKGEFGVYLVSDGSNKPYKCKIRAPGFAHLQAMDFLSRGHLLADVSAILGSLDIVFGEVDR.

The protein belongs to the complex I 49 kDa subunit family. NDH-1 is composed of 14 different subunits. Subunits NuoB, C, D, E, F, and G constitute the peripheral sector of the complex.

It localises to the cell inner membrane. The catalysed reaction is a quinone + NADH + 5 H(+)(in) = a quinol + NAD(+) + 4 H(+)(out). Its function is as follows. NDH-1 shuttles electrons from NADH, via FMN and iron-sulfur (Fe-S) centers, to quinones in the respiratory chain. The immediate electron acceptor for the enzyme in this species is believed to be ubiquinone. Couples the redox reaction to proton translocation (for every two electrons transferred, four hydrogen ions are translocated across the cytoplasmic membrane), and thus conserves the redox energy in a proton gradient. The sequence is that of NADH-quinone oxidoreductase subunit D from Rhodopseudomonas palustris (strain ATCC BAA-98 / CGA009).